The chain runs to 267 residues: Undecaprenyl-diphosphatase (267 aa).

8 helical membrane-spanning segments follow: residues 1 to 21 (MSYF…FLPI), 39 to 59 (QGLA…VIYF), 83 to 103 (AKLA…GLLM), 111 to 131 (LRSA…LWWV), 144 to 164 (TGWK…IPGT), 189 to 209 (FLMS…KLVT), 218 to 238 (FLLT…HFFL), and 245 to 265 (GMTP…AFLL).

Belongs to the UppP family.

Its subcellular location is the cell inner membrane. It catalyses the reaction di-trans,octa-cis-undecaprenyl diphosphate + H2O = di-trans,octa-cis-undecaprenyl phosphate + phosphate + H(+). Its function is as follows. Catalyzes the dephosphorylation of undecaprenyl diphosphate (UPP). Confers resistance to bacitracin. The protein is Undecaprenyl-diphosphatase of Vibrio parahaemolyticus serotype O3:K6 (strain RIMD 2210633).